The following is a 360-amino-acid chain: Protein Wnt-2 (360 aa).

A signal peptide spans 1 to 25; that stretch reads MNAPLAGIWPWLPLLLTWLAPEVSS. Cystine bridges form between cysteine 76-cysteine 87, cysteine 127-cysteine 135, cysteine 137-cysteine 157, cysteine 206-cysteine 220, cysteine 208-cysteine 215, cysteine 278-cysteine 309, cysteine 294-cysteine 304, cysteine 308-cysteine 348, cysteine 324-cysteine 339, cysteine 326-cysteine 336, and cysteine 331-cysteine 332. Residue serine 212 is the site of O-palmitoleoyl serine; by PORCN attachment. The N-linked (GlcNAc...) asparagine glycan is linked to asparagine 295.

This sequence belongs to the Wnt family. Palmitoleoylation is required for efficient binding to frizzled receptors. Depalmitoleoylation leads to Wnt signaling pathway inhibition.

The protein localises to the secreted. It localises to the extracellular space. The protein resides in the extracellular matrix. Functionally, ligand for members of the frizzled family of seven transmembrane receptors. Functions in the canonical Wnt signaling pathway that results in activation of transcription factors of the TCF/LEF family. Functions as a upstream regulator of FGF10 expression. Plays an important role in embryonic lung development. May contribute to embryonic brain development by regulating the proliferation of dopaminergic precursors and neurons. In Loxodonta africana (African elephant), this protein is Protein Wnt-2 (WNT2).